Consider the following 453-residue polypeptide: MFNKLNKINKIKNCFNKSIYQINYSSKPIFKEGITNVKLDRDNKDGTSDYIKLHDNVIMNTYGRVSDIVFTHGKDSWLYDMKGDKYLDFGAGIAVNALGHSNDGWSEVVANQSKKLTHLSNLYYNQPAIELAQSMIASTPIFDKVFFANSGTEANEAALKFAKKIGIAKGGVDKHEIIAFSHGFSGRSMGSLSCTHKSKYREIYGPLVPGVHFAEYNDIESVKKLMSKSKTCAVIIEPVQGEGGLEAATVEFMQQLYKLCKENDCLLIVDEVQCGIGRTGQLWAHTRFDTEKCKPDIMTLAKPLAGGLPIGAVLVSDKVASEIKPGDHGTTFGGGPLVCEVGKYVFERISQPSFLKEVQEKGKYLTDGLKKLKDQFPNSILEIRTVGGLFVGIQLDHNVSDLVSYAKSQKILIINAGDDVIRFCPPLTITKQEIDQLLLVLKNYLIKVNSNKK.

The residue at position 302 (lysine 302) is an N6-(pyridoxal phosphate)lysine.

This sequence belongs to the class-III pyridoxal-phosphate-dependent aminotransferase family. Requires pyridoxal 5'-phosphate as cofactor.

Its subcellular location is the mitochondrion matrix. It catalyses the reaction N(2)-acetyl-L-ornithine + 2-oxoglutarate = N-acetyl-L-glutamate 5-semialdehyde + L-glutamate. Its pathway is amino-acid biosynthesis; L-arginine biosynthesis; N(2)-acetyl-L-ornithine from L-glutamate: step 4/4. This Dictyostelium discoideum (Social amoeba) protein is Probable acetylornithine aminotransferase, mitochondrial (argD).